The following is a 366-amino-acid chain: Glutamate 5-kinase (366 aa).

Lys-17 lines the ATP pocket. Substrate contacts are provided by Ser-57, Asp-144, and Asn-156. Residues 176–177 (SD) and 216–222 (TGGMASK) each bind ATP. Positions 278–352 (QGILHIDEGA…GKSTQELPAE (75 aa)) constitute a PUA domain.

It belongs to the glutamate 5-kinase family.

It localises to the cytoplasm. It catalyses the reaction L-glutamate + ATP = L-glutamyl 5-phosphate + ADP. Its pathway is amino-acid biosynthesis; L-proline biosynthesis; L-glutamate 5-semialdehyde from L-glutamate: step 1/2. Its function is as follows. Catalyzes the transfer of a phosphate group to glutamate to form L-glutamate 5-phosphate. The chain is Glutamate 5-kinase from Rhodococcus jostii (strain RHA1).